The following is a 467-amino-acid chain: Glutamate--tRNA ligase (467 aa).

Residues proline 9–glycine 19 carry the 'HIGH' region motif. Residues lysine 237 to arginine 241 carry the 'KMSKS' region motif. An ATP-binding site is contributed by lysine 240.

It belongs to the class-I aminoacyl-tRNA synthetase family. Glutamate--tRNA ligase type 1 subfamily. Monomer.

The protein localises to the cytoplasm. The enzyme catalyses tRNA(Glu) + L-glutamate + ATP = L-glutamyl-tRNA(Glu) + AMP + diphosphate. Functionally, catalyzes the attachment of glutamate to tRNA(Glu) in a two-step reaction: glutamate is first activated by ATP to form Glu-AMP and then transferred to the acceptor end of tRNA(Glu). This Stenotrophomonas maltophilia (strain R551-3) protein is Glutamate--tRNA ligase.